A 952-amino-acid polypeptide reads, in one-letter code: MNNKVNTRDFIVVKGARENNLKNVDIDIPKNKFVVMTGLSGSGKSSLAFDTIYAEGQRRYLESLSSYARQFLGGNEKPDVDSIEGLSPAISIDQKTTSHNPRSTVGTVTEIYDYLRLLFSRIGKPYCPNGHGLISTLSIKQMIDTVYENKEESKIQILSPIISQEKGTFKNKIEELKRQGYLRLRIDGNIYSLDDEIELEKTKKHNIDILIDRIILNNDTVTRSRIYDAIEKSVKEANGKVIVLVDDKELFFSQNHACNECGFSIPELEPRFFSFNSPVGACKSCNGIGFNFLPDTAKIVPDPSLSIKEGAIAYFRSVMMTPTMDLKREMSVWKEHDINLDVPFKELSKKEKNIIFYGDEDIGELKIDVNEQSIYSSSSFLYNNGLVNLIMRRFSETQSERAREYYEKFMSNLSCPSCNGQKLSIEALSVKINNKNIIDLTEKNINDLTNFFIELELNETDRNIAHLALKEIVDRLSFLENVGLNYLTLSRSASTLSGGESQRIRLATQIGSSLTGVLYVLDEPSIGLHQKDNEKLIETLKKMRDLGNTLIVVEHDEDTIRASDYLIDIGPKAGDFGGEVVAAGTVSEVSENKKSITAQYLSGKLKIEVPSKRRHGNGKTIELVGASGNNLKNVTVSFPLNKLIAVTGVSGSGKSTLINETLIKGIEKKLTNPFIVPAPFKDIKGLKNVDKIIKVSQDPIGRTPRSNPATYVSVFDDIRDLFANTKEAKARGFQKGRFSFNVSGGRCENCSGDGLIKIEMHFLPDVFVKCESCNGKKYNQETLQVLYKGKSIYDVLEMSVVEARDFFYEIPEIKRKLDLMVEVGIDYLKLGTSSTHLSGGEAQRIKLAKYLQKRATGKTIYVLDEPTTGLHIHDIAKLITVLNRIVDNGDTVIVVEHNLDLIKCADYVIDLGPDGGINGGQLVAYGTPEEIIEKKAVSYTGLFLEKNMYKDK.

38 to 45 (GLSGSGKS) is a binding site for ATP. Residues 258–285 (CNECGFSIPELEPRFFSFNSPVGACKSC) form a C4-type zinc finger. ABC transporter domains are found at residues 315 to 596 (FRSV…KKSI) and 616 to 945 (GNGK…LFLE). An ATP-binding site is contributed by 648-655 (GVSGSGKS). The C4-type zinc-finger motif lies at 747–773 (CENCSGDGLIKIEMHFLPDVFVKCESC).

This sequence belongs to the ABC transporter superfamily. UvrA family. Forms a heterotetramer with UvrB during the search for lesions.

It localises to the cytoplasm. Functionally, the UvrABC repair system catalyzes the recognition and processing of DNA lesions. UvrA is an ATPase and a DNA-binding protein. A damage recognition complex composed of 2 UvrA and 2 UvrB subunits scans DNA for abnormalities. When the presence of a lesion has been verified by UvrB, the UvrA molecules dissociate. In Malacoplasma penetrans (strain HF-2) (Mycoplasma penetrans), this protein is UvrABC system protein A.